The chain runs to 376 residues: Chaperone protein DnaJ (376 aa).

Residues 4-68 form the J domain; sequence DYYDILGVDR…DTRSRYDQFG (65 aa). The CR-type zinc finger occupies 135–217; that stretch reads GGEKEIRIPH…CNGAGRRQVT (83 aa). Cys148, Cys151, Cys165, Cys168, Cys191, Cys194, Cys205, and Cys208 together coordinate Zn(2+). CXXCXGXG motif repeat units follow at residues 148–155, 165–172, 191–198, and 205–212; these read CQVCKGDG, CSTCNGQG, CPACNGQG, and CEVCNGAG.

Belongs to the DnaJ family. Homodimer. Zn(2+) serves as cofactor.

It localises to the cytoplasm. Its function is as follows. Participates actively in the response to hyperosmotic and heat shock by preventing the aggregation of stress-denatured proteins and by disaggregating proteins, also in an autonomous, DnaK-independent fashion. Unfolded proteins bind initially to DnaJ; upon interaction with the DnaJ-bound protein, DnaK hydrolyzes its bound ATP, resulting in the formation of a stable complex. GrpE releases ADP from DnaK; ATP binding to DnaK triggers the release of the substrate protein, thus completing the reaction cycle. Several rounds of ATP-dependent interactions between DnaJ, DnaK and GrpE are required for fully efficient folding. Also involved, together with DnaK and GrpE, in the DNA replication of plasmids through activation of initiation proteins. The sequence is that of Chaperone protein DnaJ from Crocosphaera subtropica (strain ATCC 51142 / BH68) (Cyanothece sp. (strain ATCC 51142)).